A 490-amino-acid chain; its full sequence is Betaine aldehyde dehydrogenase (490 aa).

Residues Thr-26, Ile-27, and Asp-93 each coordinate K(+). Position 150–152 (150–152) interacts with NAD(+); the sequence is GAW. The active-site Charge relay system is Lys-162. An NAD(+)-binding site is contributed by 176-179; sequence KPSE. Val-180 is a K(+) binding site. Residue 230 to 233 coordinates NAD(+); sequence GVAS. Leu-246 is a binding site for K(+). Residue Glu-252 is the Proton acceptor of the active site. NAD(+) is bound by residues Gly-254, Cys-286, and Glu-387. Cys-286 serves as the catalytic Nucleophile. Cys-286 is subject to Cysteine sulfenic acid (-SOH). K(+) contacts are provided by Lys-457 and Gly-460. Glu-464 functions as the Charge relay system in the catalytic mechanism.

Belongs to the aldehyde dehydrogenase family. In terms of assembly, dimer of dimers. It depends on K(+) as a cofactor.

The enzyme catalyses betaine aldehyde + NAD(+) + H2O = glycine betaine + NADH + 2 H(+). Its pathway is amine and polyamine biosynthesis; betaine biosynthesis via choline pathway; betaine from betaine aldehyde: step 1/1. Its function is as follows. Involved in the biosynthesis of the osmoprotectant glycine betaine. Catalyzes the irreversible oxidation of betaine aldehyde to the corresponding acid. The sequence is that of Betaine aldehyde dehydrogenase from Escherichia coli (strain K12 / DH10B).